An 833-amino-acid chain; its full sequence is Leucine--tRNA ligase (833 aa).

The 'HIGH' region signature appears at 41–52 (PYPSGAGLHVGH). The 'KMSKS' region signature appears at 610–614 (KMSKS). Residue Lys-613 participates in ATP binding.

This sequence belongs to the class-I aminoacyl-tRNA synthetase family.

It is found in the cytoplasm. It catalyses the reaction tRNA(Leu) + L-leucine + ATP = L-leucyl-tRNA(Leu) + AMP + diphosphate. This Streptococcus thermophilus (strain CNRZ 1066) protein is Leucine--tRNA ligase.